Consider the following 452-residue polypeptide: Phosphoglucosamine mutase (452 aa).

The active-site Phosphoserine intermediate is the serine 103. Residues serine 103, aspartate 244, aspartate 246, and aspartate 248 each coordinate Mg(2+). Phosphoserine is present on serine 103.

It belongs to the phosphohexose mutase family. Mg(2+) is required as a cofactor. Post-translationally, activated by phosphorylation.

The catalysed reaction is alpha-D-glucosamine 1-phosphate = D-glucosamine 6-phosphate. Its function is as follows. Catalyzes the conversion of glucosamine-6-phosphate to glucosamine-1-phosphate. The sequence is that of Phosphoglucosamine mutase from Fusobacterium nucleatum subsp. nucleatum (strain ATCC 25586 / DSM 15643 / BCRC 10681 / CIP 101130 / JCM 8532 / KCTC 2640 / LMG 13131 / VPI 4355).